The primary structure comprises 507 residues: Maturase K (507 aa).

The protein belongs to the intron maturase 2 family. MatK subfamily.

It localises to the plastid. The protein resides in the chloroplast. Functionally, usually encoded in the trnK tRNA gene intron. Probably assists in splicing its own and other chloroplast group II introns. The polypeptide is Maturase K (Annona muricata (Soursop)).